The following is a 324-amino-acid chain: Dolichyl-phosphate beta-glucosyltransferase (324 aa).

Over 1–7 (MATLLLQ) the chain is Lumenal. A helical transmembrane segment spans residues 8 to 28 (LLGLGVALAAAALILVSIVAF). The Cytoplasmic portion of the chain corresponds to 29–324 (ITATKMPPCY…WRLKQTRKAS (296 aa)).

It belongs to the glycosyltransferase 2 family.

Its subcellular location is the endoplasmic reticulum membrane. The enzyme catalyses a di-trans,poly-cis-dolichyl phosphate + UDP-alpha-D-glucose = a di-trans,poly-cis-dolichyl beta-D-glucosyl phosphate + UDP. Its pathway is protein modification; protein glycosylation. Dolichyl-phosphate beta-glucosyltransferase that operates in the biosynthetic pathway of dolichol-linked oligosaccharides, the glycan precursors employed in protein asparagine (N)-glycosylation. The assembly of dolichol-linked oligosaccharides begins on the cytosolic side of the endoplasmic reticulum membrane and finishes in its lumen. The sequential addition of sugars to dolichol pyrophosphate produces dolichol-linked oligosaccharides containing fourteen sugars, including two GlcNAcs, nine mannoses and three glucoses. Once assembled, the oligosaccharide is transferred from the lipid to nascent proteins by oligosaccharyltransferases. Dolichyl-phosphate beta-glucosyltransferase produces dolichyl beta-D-glucosyl phosphate/Dol-P-Glc, the glucose donor substrate used sequentially by ALG6, ALG8 and ALG10 to add glucose residues on top of the Man(9)GlcNAc(2)-PP-Dol structure. These are the three last steps in the biosynthetic pathway of dolichol-linked oligosaccharides to produce Glc(3)Man(9)GlcNAc(2)-PP-Dol. The enzyme is most probably active on the cytoplasmic side of the endoplasmic reticulum while its product Dol-P-Glc is the substrate for ALG6, ALG8 and ALG11 in the lumen of the endoplasmic reticulum. The polypeptide is Dolichyl-phosphate beta-glucosyltransferase (Mus musculus (Mouse)).